We begin with the raw amino-acid sequence, 333 residues long: Glycerol-3-phosphate dehydrogenase [NAD(P)+] (333 aa).

NADPH is bound by residues S10, W11, H31, R32, and K105. Sn-glycerol 3-phosphate-binding residues include K105, G136, and S138. A140 provides a ligand contact to NADPH. 5 residues coordinate sn-glycerol 3-phosphate: K191, D244, S254, R255, and N256. K191 serves as the catalytic Proton acceptor. R255 is a binding site for NADPH. Residues I279 and E281 each coordinate NADPH.

This sequence belongs to the NAD-dependent glycerol-3-phosphate dehydrogenase family.

It localises to the cytoplasm. It catalyses the reaction sn-glycerol 3-phosphate + NAD(+) = dihydroxyacetone phosphate + NADH + H(+). The enzyme catalyses sn-glycerol 3-phosphate + NADP(+) = dihydroxyacetone phosphate + NADPH + H(+). It participates in membrane lipid metabolism; glycerophospholipid metabolism. Functionally, catalyzes the reduction of the glycolytic intermediate dihydroxyacetone phosphate (DHAP) to sn-glycerol 3-phosphate (G3P), the key precursor for phospholipid synthesis. The protein is Glycerol-3-phosphate dehydrogenase [NAD(P)+] of Pelodictyon phaeoclathratiforme (strain DSM 5477 / BU-1).